The chain runs to 298 residues: GTPase Era (298 aa).

An Era-type G domain is found at 3-170 (KSGFVAILGR…IKLLTDNLEE (168 aa)). The tract at residues 11 to 18 (GRPNVGKS) is G1. Residue 11 to 18 (GRPNVGKS) participates in GTP binding. The segment at 37–41 (QTTRN) is G2. The interval 58 to 61 (DTPG) is G3. GTP-binding positions include 58 to 62 (DTPGI) and 120 to 123 (NKID). Residues 120–123 (NKID) form a G4 region. The interval 149–151 (ISA) is G5. One can recognise a KH type-2 domain in the interval 201–279 (TQQEVPHSVA…YLETWVKVKK (79 aa)).

It belongs to the TRAFAC class TrmE-Era-EngA-EngB-Septin-like GTPase superfamily. Era GTPase family. In terms of assembly, monomer.

Its subcellular location is the cytoplasm. It is found in the cell membrane. In terms of biological role, an essential GTPase that binds both GDP and GTP, with rapid nucleotide exchange. Plays a role in 16S rRNA processing and 30S ribosomal subunit biogenesis and possibly also in cell cycle regulation and energy metabolism. In Streptococcus pyogenes serotype M2 (strain MGAS10270), this protein is GTPase Era.